We begin with the raw amino-acid sequence, 137 residues long: Small ribosomal subunit protein uS12 (137 aa).

Residues Met-1–Ala-23 are disordered. A 3-methylthioaspartic acid modification is found at Asp-102.

This sequence belongs to the universal ribosomal protein uS12 family. As to quaternary structure, part of the 30S ribosomal subunit. Contacts proteins S8 and S17. May interact with IF1 in the 30S initiation complex.

In terms of biological role, with S4 and S5 plays an important role in translational accuracy. Interacts with and stabilizes bases of the 16S rRNA that are involved in tRNA selection in the A site and with the mRNA backbone. Located at the interface of the 30S and 50S subunits, it traverses the body of the 30S subunit contacting proteins on the other side and probably holding the rRNA structure together. The combined cluster of proteins S8, S12 and S17 appears to hold together the shoulder and platform of the 30S subunit. The chain is Small ribosomal subunit protein uS12 from Leuconostoc citreum (strain KM20).